The primary structure comprises 205 residues: ATP synthase subunit b 1 (205 aa).

Residues 1 to 15 (MFVSTAFAQTATESQ) are compositionally biased toward polar residues. The segment at 1-26 (MFVSTAFAQTATESQPAPAAGEHGAA) is disordered. The segment covering 16–26 (PAPAAGEHGAA) has biased composition (low complexity). A helical transmembrane segment spans residues 56–78 (SQILWLAITFGLFYLFMSRVVLP).

This sequence belongs to the ATPase B chain family. As to quaternary structure, F-type ATPases have 2 components, F(1) - the catalytic core - and F(0) - the membrane proton channel. F(1) has five subunits: alpha(3), beta(3), gamma(1), delta(1), epsilon(1). F(0) has three main subunits: a(1), b(2) and c(10-14). The alpha and beta chains form an alternating ring which encloses part of the gamma chain. F(1) is attached to F(0) by a central stalk formed by the gamma and epsilon chains, while a peripheral stalk is formed by the delta and b chains.

The protein resides in the cell inner membrane. In terms of biological role, f(1)F(0) ATP synthase produces ATP from ADP in the presence of a proton or sodium gradient. F-type ATPases consist of two structural domains, F(1) containing the extramembraneous catalytic core and F(0) containing the membrane proton channel, linked together by a central stalk and a peripheral stalk. During catalysis, ATP synthesis in the catalytic domain of F(1) is coupled via a rotary mechanism of the central stalk subunits to proton translocation. Functionally, component of the F(0) channel, it forms part of the peripheral stalk, linking F(1) to F(0). This is ATP synthase subunit b 1 from Brucella anthropi (strain ATCC 49188 / DSM 6882 / CCUG 24695 / JCM 21032 / LMG 3331 / NBRC 15819 / NCTC 12168 / Alc 37) (Ochrobactrum anthropi).